We begin with the raw amino-acid sequence, 309 residues long: Elongation factor Ts (309 aa).

The involved in Mg(2+) ion dislocation from EF-Tu stretch occupies residues Thr82–Val85.

Belongs to the EF-Ts family.

The protein localises to the cytoplasm. In terms of biological role, associates with the EF-Tu.GDP complex and induces the exchange of GDP to GTP. It remains bound to the aminoacyl-tRNA.EF-Tu.GTP complex up to the GTP hydrolysis stage on the ribosome. The chain is Elongation factor Ts from Rickettsia massiliae (strain Mtu5).